Consider the following 97-residue polypeptide: Aspartyl/glutamyl-tRNA(Asn/Gln) amidotransferase subunit C (97 aa).

The protein belongs to the GatC family. In terms of assembly, heterotrimer of A, B and C subunits.

It catalyses the reaction L-glutamyl-tRNA(Gln) + L-glutamine + ATP + H2O = L-glutaminyl-tRNA(Gln) + L-glutamate + ADP + phosphate + H(+). It carries out the reaction L-aspartyl-tRNA(Asn) + L-glutamine + ATP + H2O = L-asparaginyl-tRNA(Asn) + L-glutamate + ADP + phosphate + 2 H(+). Allows the formation of correctly charged Asn-tRNA(Asn) or Gln-tRNA(Gln) through the transamidation of misacylated Asp-tRNA(Asn) or Glu-tRNA(Gln) in organisms which lack either or both of asparaginyl-tRNA or glutaminyl-tRNA synthetases. The reaction takes place in the presence of glutamine and ATP through an activated phospho-Asp-tRNA(Asn) or phospho-Glu-tRNA(Gln). The chain is Aspartyl/glutamyl-tRNA(Asn/Gln) amidotransferase subunit C from Listeria monocytogenes serotype 4b (strain CLIP80459).